The chain runs to 1328 residues: Protein turtle homolog B (1328 aa).

The N-terminal stretch at 1–20 (MIWYVATLIASVISTRGLVA) is a signal peptide. Over 21-722 (QVAHGLREEP…DLTDDGLARP (702 aa)) the chain is Extracellular. Ig-like domains are found at residues 30–115 (PEFV…ECKV), 139–226 (PTFT…LLVQ), 228–320 (PPFI…AYLT), 324–415 (PARV…ARLV), and 420–504 (PYFT…THLT). Disulfide bonds link Cys45-Cys113 and Cys161-Cys208. N-linked (GlcNAc...) asparagine glycosylation is found at Asn241 and Asn258. Cystine bridges form between Cys250/Cys303, Cys346/Cys397, and Cys442/Cys488. Fibronectin type-III domains lie at 512–604 (APGS…TLAF) and 614–708 (LVTP…STDI). An N-linked (GlcNAc...) asparagine glycan is attached at Asn624. A helical membrane pass occupies residues 723 to 743 (VLAGIVATICFLAAAILFSTL). At 744–1328 (AACFVNKQRK…EPPTTLPTSG (585 aa)) the chain is on the cytoplasmic side. Disordered regions lie at residues 758-817 (RKKD…EKEL), 914-1040 (PMSS…PEPW), and 1107-1328 (SPGR…PTSG). 3 positions are modified to phosphoserine: Ser775, Ser783, and Ser794. A compositionally biased stretch (low complexity) spans 990-1001 (SPLSSVMSSPPL). 3 stretches are compositionally biased toward polar residues: residues 1018-1033 (ENAS…TPTG), 1129-1141 (LVSQ…TSQG), and 1199-1214 (SRLS…SRTG). Omega-N-methylarginine is present on Arg1136. Residues Ser1207 and Ser1215 each carry the phosphoserine modification. Low complexity predominate over residues 1246–1273 (SFSRKSTPSSTGSPSQSSRSGSPSYRPT). Pro residues-rich tracts occupy residues 1284-1295 (PSPPPGPAPPAP) and 1318-1328 (PEPPTTLPTSG).

This sequence belongs to the immunoglobulin superfamily. Turtle family. As to quaternary structure, found in a complex with MAGI2 and NLGN2, where it interacts with MAGI2 (via PDZ 5 and PDZ 6 domains). Post-translationally, N-glycosylated and sialylated. Not significantly O-glycosylated. As to expression, detected primarily in brain, including cortex, hippocampus, cerebellum and striatum. Largely restricted to inhibitory GABAergic interneurons (at protein level).

The protein resides in the postsynaptic cell membrane. It localises to the postsynaptic density. Its function is as follows. Transmembrane protein which is abundantly expressed in interneurons, where it may regulate inhibitory synapse development. May mediate homophilic cell adhesion. The chain is Protein turtle homolog B from Rattus norvegicus (Rat).